We begin with the raw amino-acid sequence, 215 residues long: Floral homeotic protein GLOBOSA (215 aa).

Positions 3 to 57 (RGKIEIKRIENSSNRQVTYSKRRNGIMKKAKEISVLCDAHVSVIIFASSGKMHEF) constitute an MADS-box domain. In terms of domain architecture, K-box spans 84–170 (HEHLDNEINR…QFKLRQMHLD (87 aa)).

Its subcellular location is the nucleus. Functionally, transcription factor involved in the genetic control of flower development. Acts in conjunction with DEFICIENS (defA). This is Floral homeotic protein GLOBOSA (GLO) from Antirrhinum majus (Garden snapdragon).